Here is a 224-residue protein sequence, read N- to C-terminus: Heme response regulator HssR (224 aa).

The 114-residue stretch at 3 to 116 folds into the Response regulatory domain; it reads NCLIVDDDKK…ELLFRIKAVL (114 aa). Aspartate 52 carries the post-translational modification 4-aspartylphosphate. Residues 124-222 constitute a DNA-binding region (ompR/PhoB-type); that stretch reads DNELQLGNLI…VRGQGYRVDQ (99 aa).

Post-translationally, phosphorylated by HssS.

Its subcellular location is the cytoplasm. Its function is as follows. Member of the two-component regulatory system HssS/HssR involved in intracellular heme homeostasis and tempering of staphylococcal virulence. Phosphorylated HssR binds to a direct repeat sequence within hrtAB promoter and activates the expression of hrtAB, an efflux pump, in response to extracellular heme, hemin, hemoglobin or blood. The protein is Heme response regulator HssR (hssR) of Staphylococcus epidermidis (strain ATCC 12228 / FDA PCI 1200).